Reading from the N-terminus, the 139-residue chain is D-ribose pyranase (139 aa).

The active-site Proton donor is the His20. Substrate is bound by residues Asp28, His106, and 128–130; that span reads YAN.

This sequence belongs to the RbsD / FucU family. RbsD subfamily. In terms of assembly, homodecamer.

It localises to the cytoplasm. It carries out the reaction beta-D-ribopyranose = beta-D-ribofuranose. Its pathway is carbohydrate metabolism; D-ribose degradation; D-ribose 5-phosphate from beta-D-ribopyranose: step 1/2. Catalyzes the interconversion of beta-pyran and beta-furan forms of D-ribose. The sequence is that of D-ribose pyranase from Cronobacter sakazakii (strain ATCC BAA-894) (Enterobacter sakazakii).